The chain runs to 506 residues: AMP phosphorylase (506 aa).

Residues Gly167, 193–198, and Thr202 contribute to the AMP site; that span reads SRAITG. The Proton donor role is filled by Asp255. 2 residues coordinate AMP: Ser263 and Lys287.

It belongs to the thymidine/pyrimidine-nucleoside phosphorylase family. Type 2 subfamily.

It carries out the reaction AMP + phosphate = alpha-D-ribose 1,5-bisphosphate + adenine. The catalysed reaction is CMP + phosphate = cytosine + alpha-D-ribose 1,5-bisphosphate. It catalyses the reaction UMP + phosphate = alpha-D-ribose 1,5-bisphosphate + uracil. Catalyzes the conversion of AMP and phosphate to adenine and ribose 1,5-bisphosphate (R15P). Exhibits phosphorylase activity toward CMP and UMP in addition to AMP. Functions in an archaeal AMP degradation pathway, together with R15P isomerase and RubisCO. In Methanosarcina barkeri (strain Fusaro / DSM 804), this protein is AMP phosphorylase.